The sequence spans 328 residues: uncharacterized protein (328 aa).

This is an uncharacterized protein from Bacillus anthracis.